We begin with the raw amino-acid sequence, 412 residues long: Multifunctional CCA protein (412 aa).

ATP is bound by residues Gly8 and Arg11. Gly8 and Arg11 together coordinate CTP. The Mg(2+) site is built by Asp21 and Asp23. Residues Arg91, Arg137, and Arg140 each coordinate ATP. 3 residues coordinate CTP: Arg91, Arg137, and Arg140. In terms of domain architecture, HD spans 228 to 329; it reads TGIHTLMTLS…VKLFDSIDAW (102 aa).

It belongs to the tRNA nucleotidyltransferase/poly(A) polymerase family. Bacterial CCA-adding enzyme type 1 subfamily. Monomer. Can also form homodimers and oligomers. Mg(2+) serves as cofactor. Requires Ni(2+) as cofactor.

The catalysed reaction is a tRNA precursor + 2 CTP + ATP = a tRNA with a 3' CCA end + 3 diphosphate. The enzyme catalyses a tRNA with a 3' CCA end + 2 CTP + ATP = a tRNA with a 3' CCACCA end + 3 diphosphate. Catalyzes the addition and repair of the essential 3'-terminal CCA sequence in tRNAs without using a nucleic acid template. Adds these three nucleotides in the order of C, C, and A to the tRNA nucleotide-73, using CTP and ATP as substrates and producing inorganic pyrophosphate. tRNA 3'-terminal CCA addition is required both for tRNA processing and repair. Also involved in tRNA surveillance by mediating tandem CCA addition to generate a CCACCA at the 3' terminus of unstable tRNAs. While stable tRNAs receive only 3'-terminal CCA, unstable tRNAs are marked with CCACCA and rapidly degraded. In Escherichia coli O6:H1 (strain CFT073 / ATCC 700928 / UPEC), this protein is Multifunctional CCA protein.